The chain runs to 504 residues: Cytochrome P450 4A24 (504 aa).

Helical transmembrane passes span 6–26 and 112–132; these read LASASGLLQVASLLGLLLLLL and VVYRLLIPWIGCGLLLLNGQT. Cysteine 451 is a heme binding site.

The protein belongs to the cytochrome P450 family. Heme serves as cofactor.

Its subcellular location is the endoplasmic reticulum membrane. The enzyme catalyses an omega-methyl-long-chain fatty acid + reduced [NADPH--hemoprotein reductase] + O2 = an omega-hydroxy-long-chain fatty acid + oxidized [NADPH--hemoprotein reductase] + H2O + H(+). Catalyzes the omega- and (omega-1)-hydroxylation of various fatty acids such as laurate and palmitate. Has no activity toward taurochenodeoxycholic acid. The sequence is that of Cytochrome P450 4A24 (CYP4A24) from Sus scrofa (Pig).